The chain runs to 337 residues: Anthranilate phosphoribosyltransferase (337 aa).

5-phospho-alpha-D-ribose 1-diphosphate-binding positions include Gly-80, 83–84 (GD), Thr-88, 90–93 (NIST), 108–116 (KHGNRAVSS), and Ser-120. Gly-80 is a binding site for anthranilate. Ser-92 contacts Mg(2+). Asn-111 serves as a coordination point for anthranilate. Arg-166 contacts anthranilate. Residues Asp-224 and Glu-225 each coordinate Mg(2+).

This sequence belongs to the anthranilate phosphoribosyltransferase family. As to quaternary structure, homodimer. It depends on Mg(2+) as a cofactor.

The enzyme catalyses N-(5-phospho-beta-D-ribosyl)anthranilate + diphosphate = 5-phospho-alpha-D-ribose 1-diphosphate + anthranilate. Its pathway is amino-acid biosynthesis; L-tryptophan biosynthesis; L-tryptophan from chorismate: step 2/5. Catalyzes the transfer of the phosphoribosyl group of 5-phosphorylribose-1-pyrophosphate (PRPP) to anthranilate to yield N-(5'-phosphoribosyl)-anthranilate (PRA). This chain is Anthranilate phosphoribosyltransferase, found in Anaeromyxobacter sp. (strain Fw109-5).